The following is a 245-amino-acid chain: 2-C-methyl-D-erythritol 4-phosphate cytidylyltransferase (245 aa).

The protein belongs to the IspD/TarI cytidylyltransferase family. IspD subfamily.

The catalysed reaction is 2-C-methyl-D-erythritol 4-phosphate + CTP + H(+) = 4-CDP-2-C-methyl-D-erythritol + diphosphate. The protein operates within isoprenoid biosynthesis; isopentenyl diphosphate biosynthesis via DXP pathway; isopentenyl diphosphate from 1-deoxy-D-xylulose 5-phosphate: step 2/6. In terms of biological role, catalyzes the formation of 4-diphosphocytidyl-2-C-methyl-D-erythritol from CTP and 2-C-methyl-D-erythritol 4-phosphate (MEP). The sequence is that of 2-C-methyl-D-erythritol 4-phosphate cytidylyltransferase from Chloroherpeton thalassium (strain ATCC 35110 / GB-78).